Reading from the N-terminus, the 878-residue chain is Alanine--tRNA ligase (878 aa).

4 residues coordinate Zn(2+): His562, His566, Cys670, and His674.

This sequence belongs to the class-II aminoacyl-tRNA synthetase family. Zn(2+) serves as cofactor.

Its subcellular location is the cytoplasm. The enzyme catalyses tRNA(Ala) + L-alanine + ATP = L-alanyl-tRNA(Ala) + AMP + diphosphate. Functionally, catalyzes the attachment of alanine to tRNA(Ala) in a two-step reaction: alanine is first activated by ATP to form Ala-AMP and then transferred to the acceptor end of tRNA(Ala). Also edits incorrectly charged Ser-tRNA(Ala) and Gly-tRNA(Ala) via its editing domain. In Acinetobacter baumannii (strain ACICU), this protein is Alanine--tRNA ligase.